A 242-amino-acid chain; its full sequence is Biosynthetic peptidoglycan transglycosylase (242 aa).

A helical membrane pass occupies residues 15-35 (FLLLLMVVLAVFWGGGIALFS).

It belongs to the glycosyltransferase 51 family.

It localises to the cell inner membrane. It carries out the reaction [GlcNAc-(1-&gt;4)-Mur2Ac(oyl-L-Ala-gamma-D-Glu-L-Lys-D-Ala-D-Ala)](n)-di-trans,octa-cis-undecaprenyl diphosphate + beta-D-GlcNAc-(1-&gt;4)-Mur2Ac(oyl-L-Ala-gamma-D-Glu-L-Lys-D-Ala-D-Ala)-di-trans,octa-cis-undecaprenyl diphosphate = [GlcNAc-(1-&gt;4)-Mur2Ac(oyl-L-Ala-gamma-D-Glu-L-Lys-D-Ala-D-Ala)](n+1)-di-trans,octa-cis-undecaprenyl diphosphate + di-trans,octa-cis-undecaprenyl diphosphate + H(+). It functions in the pathway cell wall biogenesis; peptidoglycan biosynthesis. Peptidoglycan polymerase that catalyzes glycan chain elongation from lipid-linked precursors. This chain is Biosynthetic peptidoglycan transglycosylase, found in Shigella sonnei (strain Ss046).